We begin with the raw amino-acid sequence, 160 residues long: Transcriptional regulator MraZ (160 aa).

SpoVT-AbrB domains lie at 5-50 and 93-136; these read KFET…EGVY and AIEC…SQAE.

The protein belongs to the MraZ family. As to quaternary structure, forms oligomers.

Its subcellular location is the cytoplasm. The protein resides in the nucleoid. In Geotalea uraniireducens (strain Rf4) (Geobacter uraniireducens), this protein is Transcriptional regulator MraZ.